The following is a 152-amino-acid chain: Clitocypin-5 (152 aa).

In terms of assembly, homodimer.

Functionally, binds and inhibits cysteine proteinases. Inhibits most strongly papain and cathepsin L, more weakly bromelain and cathepsin B while it is completely ineffective against cathepsin H. The polypeptide is Clitocypin-5 (clt5) (Clitocybe nebularis (Clouded agaric)).